Consider the following 336-residue polypeptide: Small ribosomal subunit protein uS9m (336 aa).

Residues 32 to 81 (STTTTTTTTTTTTTSDEIPTTKPRFQSRFRRNQQPHQQQRSPYTSSQVTE) are disordered. Residues 33 to 45 (TTTTTTTTTTTTT) are compositionally biased toward low complexity. A compositionally biased stretch (polar residues) spans 65–81 (QPHQQQRSPYTSSQVTE).

This sequence belongs to the universal ribosomal protein uS9 family. Component of the mitochondrial small ribosomal subunit (mt-SSU).

It is found in the mitochondrion. Its function is as follows. Component of the mitochondrial ribosome (mitoribosome), a dedicated translation machinery responsible for the synthesis of mitochondrial genome-encoded proteins, including at least some of the essential transmembrane subunits of the mitochondrial respiratory chain. The mitoribosomes are attached to the mitochondrial inner membrane and translation products are cotranslationally integrated into the membrane. This is Small ribosomal subunit protein uS9m (MRPS9) from Candida albicans (strain SC5314 / ATCC MYA-2876) (Yeast).